The sequence spans 30 residues: Poly-His-poly-Gly peptide 2 (30 aa).

The span at 1 to 18 (EDDHDHHHHHHHHHHHHG) shows a compositional bias: basic residues. The interval 1-30 (EDDHDHHHHHHHHHHHHGVGGGGGGGGGGA) is disordered. Residues 19 to 30 (VGGGGGGGGGGA) are compositionally biased toward gly residues.

As to expression, expressed by the venom gland.

The protein localises to the secreted. In terms of biological role, may serve as a metalloproteinase inhibitor during glandular storage. Their inhibition may be instantly disengaged, by dilution or physiochemical change, when venom is injected into tissue of the victim. The chain is Poly-His-poly-Gly peptide 2 from Atheris nitschei (Great lakes bush viper).